We begin with the raw amino-acid sequence, 119 residues long: MAFTPKIITCLIVLTIYMASPTESTIQCGTVTSTLAQCLTYLTNSGPLPSQCCVGVKSLYQLAQTTPDRKQVCECLKLAGKEIKGLNTDLVAALPTTCGVSIPYPISFSTNCDSISTAV.

The first 24 residues, 1 to 24, serve as a signal peptide directing secretion; it reads MAFTPKIITCLIVLTIYMASPTES. 4 cysteine pairs are disulfide-bonded: Cys28/Cys75, Cys38/Cys52, Cys53/Cys98, and Cys73/Cys112.

The protein belongs to the plant LTP family.

In terms of biological role, plant non-specific lipid-transfer proteins transfer phospholipids as well as galactolipids across membranes. May play a role in wax or cutin deposition in the cell walls of expanding epidermal cells and certain secretory tissues. This Arabidopsis thaliana (Mouse-ear cress) protein is Non-specific lipid-transfer protein 12 (LTP12).